Here is a 348-residue protein sequence, read N- to C-terminus: Erlin-1 (348 aa).

Over 1–7 (MNMTQAR) the chain is Cytoplasmic. Residues 8 to 28 (LLVAAVVGLVAILLYASIHKI) traverse the membrane as a helical segment. Residues 29-348 (EEGHLAVYYR…SPIQNKENAG (320 aa)) are Lumenal-facing. Asparagine 108 carries an N-linked (GlcNAc...) asparagine glycan. N6-acetyllysine is present on lysine 269. The span at 318 to 336 (DGRTGREDSLPPEEAREPS) shows a compositional bias: basic and acidic residues. Positions 318–348 (DGRTGREDSLPPEEAREPSGESPIQNKENAG) are disordered. The span at 339–348 (SPIQNKENAG) shows a compositional bias: polar residues.

This sequence belongs to the band 7/mec-2 family. As to quaternary structure, forms a heteromeric complex with ERLIN2. In complex with ERLIN2, interacts with RNF170. Interacts with AMFR and SYVN1. Post-translationally, deubiquitinated by USP25; leading to stabilization.

Its subcellular location is the endoplasmic reticulum membrane. Its function is as follows. Component of the ERLIN1/ERLIN2 complex which mediates the endoplasmic reticulum-associated degradation (ERAD) of inositol 1,4,5-trisphosphate receptors (IP3Rs). Involved in regulation of cellular cholesterol homeostasis by regulation the SREBP signaling pathway. Binds cholesterol and may promote ER retention of the SCAP-SREBF complex. This Mus musculus (Mouse) protein is Erlin-1.